The following is a 203-amino-acid chain: Auxin-induced protein 22E (203 aa).

The EAR-like (transcriptional repression) signature appears at 15–19; sequence LRLGL. Positions 15-77 are disordered; that stretch reads LRLGLPGSDE…DHNEDSVQPA (63 aa). Over residues 43–52 the composition is skewed to basic and acidic residues; sequence SSPELEESRC. Over residues 58-67 the composition is skewed to low complexity; that stretch reads SDSSDSTTTS. One can recognise a PB1 domain in the interval 107 to 199; sequence GMYLKVSMAG…RIIKGSEAKG (93 aa).

The protein belongs to the Aux/IAA family. As to quaternary structure, homodimers and heterodimers.

It localises to the nucleus. Its function is as follows. Aux/IAA proteins are short-lived transcriptional factors that function as repressors of early auxin response genes at low auxin concentrations. Repression is thought to result from the interaction with auxin response factors (ARFs), proteins that bind to the auxin-responsive promoter element (AuxRE). Formation of heterodimers with ARF proteins may alter their ability to modulate early auxin response genes expression. The polypeptide is Auxin-induced protein 22E (AUX22E) (Vigna radiata var. radiata (Mung bean)).